We begin with the raw amino-acid sequence, 535 residues long: Expansin-like protein 9 (535 aa).

An N-terminal signal peptide occupies residues 1-25 (MKINKNNYFKIIIFIIYVIINLINA). N-linked (GlcNAc...) asparagine glycosylation is present at Asn-24. Over 26 to 514 (SDNVKLSNCG…DNSSNILLFS (489 aa)) the chain is Extracellular. The Expansin-like EG45 domain maps to 31–144 (LSNCGQARAE…QEVSCGFLGN (114 aa)). Intrachain disulfides connect Cys-34–Cys-75 and Cys-78–Cys-139. N-linked (GlcNAc...) asparagine glycosylation is found at Asn-122, Asn-257, and Asn-292. The disordered stretch occupies residues 459–487 (VDGSSNDDDGTGGTGGGASNKVGKRVDGE). The N-linked (GlcNAc...) asparagine glycan is linked to Asn-506. The helical transmembrane segment at 515–535 (FNITLTFLLLSLIINILLLLF) threads the bilayer.

Belongs to the expansin family. Expansin A subfamily.

The protein localises to the membrane. Its function is as follows. May serve to lubricate the movement of the cellulose microfibrils during cell growth and wall extension and/or may serve to maintain the fluid state of the slug cell wall. This Dictyostelium discoideum (Social amoeba) protein is Expansin-like protein 9 (expl9).